The following is a 103-amino-acid chain: Nucleoid-associated protein Adeh_3636 (103 aa).

The protein belongs to the YbaB/EbfC family. In terms of assembly, homodimer.

The protein localises to the cytoplasm. The protein resides in the nucleoid. In terms of biological role, binds to DNA and alters its conformation. May be involved in regulation of gene expression, nucleoid organization and DNA protection. This Anaeromyxobacter dehalogenans (strain 2CP-C) protein is Nucleoid-associated protein Adeh_3636.